Reading from the N-terminus, the 325-residue chain is Retinal homeobox protein Rx-B (325 aa).

Residues 32 to 39 (HSIEAILG) carry the Octapeptide motif motif. The span at 75–87 (TEEIHPQQEHLED) shows a compositional bias: basic and acidic residues. The segment at 75-136 (TEEIHPQQEH…KKKHRRNRTT (62 aa)) is disordered. Polar residues predominate over residues 99-117 (AKTSSECLSPGLSTSNSDN). A DNA-binding region (homeobox) is located at residues 130-189 (HRRNRTTFTTYQLHELERAFEKSHYPDVYSREELAMKVNLPEVRVQVWFQNRRAKWRRQE). The short motif at 302–315 (NSIASLRMKAKEHI) is the OAR element. The Nuclear localization signal motif lies at 308–312 (RMKAK).

The protein belongs to the paired homeobox family. Bicoid subfamily. In terms of tissue distribution, highly expressed in anterior neural plate followed by neural retina, pigmented epithelium, in pineal gland, diencephalon floor and epiphysis. At later stages, the neuroretina remains the primary site of expression. No expression in the developing lens and cornea.

The protein localises to the nucleus. Plays a critical role in eye formation by regulating the initial specification of retinal cells and/or their subsequent proliferation. The protein is Retinal homeobox protein Rx-B (rax-b) of Xenopus laevis (African clawed frog).